The primary structure comprises 72 residues: Translation initiation factor IF-1 (72 aa).

One can recognise an S1-like domain in the interval 1–72 (MAKDDVIEVE…NRGRITYRFK (72 aa)). Tyr60 is subject to Phosphotyrosine.

It belongs to the IF-1 family. As to quaternary structure, component of the 30S ribosomal translation pre-initiation complex which assembles on the 30S ribosome in the order IF-2 and IF-3, IF-1 and N-formylmethionyl-tRNA(fMet); mRNA recruitment can occur at any time during PIC assembly.

The protein localises to the cytoplasm. Functionally, one of the essential components for the initiation of protein synthesis. Stabilizes the binding of IF-2 and IF-3 on the 30S subunit to which N-formylmethionyl-tRNA(fMet) subsequently binds. Helps modulate mRNA selection, yielding the 30S pre-initiation complex (PIC). Upon addition of the 50S ribosomal subunit IF-1, IF-2 and IF-3 are released leaving the mature 70S translation initiation complex. In Bacillus thuringiensis (strain Al Hakam), this protein is Translation initiation factor IF-1.